The sequence spans 74 residues: Kappa-scoloptoxin(07)-Ssm2f (74 aa).

A signal peptide spans 1–19 (MLVFYAILFVTVFSNTVMG). The propeptide occupies 20–41 (ATIDKPIPKPIFREAIEEMEVN).

The protein belongs to the scoloptoxin-07 family. In terms of processing, contains 3 disulfide bonds. As to expression, expressed by the venom gland.

It is found in the secreted. Its function is as follows. Inhibits voltage-gated potassium channels. The polypeptide is Kappa-scoloptoxin(07)-Ssm2f (Scolopendra mutilans (Chinese red-headed centipede)).